A 259-amino-acid chain; its full sequence is UPF0246 protein PSPTO_1244 (259 aa).

The protein belongs to the UPF0246 family.

The chain is UPF0246 protein PSPTO_1244 from Pseudomonas syringae pv. tomato (strain ATCC BAA-871 / DC3000).